A 105-amino-acid chain; its full sequence is Thioredoxin (105 aa).

The Thioredoxin domain maps to 2–105 (VKLIESKEAF…KLEASITEYA (104 aa)). An N6-acetyllysine modification is found at Lys-3. The residue at position 8 (Lys-8) is an N6-succinyllysine. Residues Cys-32 and Cys-35 each act as nucleophile in the active site. Cys-32 and Cys-35 are joined by a disulfide. An N6-acetyllysine modification is found at Lys-39. 2 positions are modified to S-nitrosocysteine: Cys-62 and Cys-69. Cys-73 is modified (S-nitrosocysteine; alternate). Lys-94 bears the N6-acetyllysine; alternate mark. An N6-succinyllysine; alternate modification is found at Lys-94.

The protein belongs to the thioredoxin family. As to quaternary structure, homodimer; disulfide-linked. Interacts with TXNIP through the redox-active site. Interacts with MAP3K5 and CASP3. Interacts with APEX1; the interaction stimulates the FOS/JUN AP-1 DNA-binding activity in a redox-dependent manner. In terms of processing, in the fully reduced protein, both Cys-69 and Cys-73 are nitrosylated in response to nitric oxide (NO). When two disulfide bonds are present in the protein, only Cys-73 is nitrosylated. Cys-73 can serve as donor for nitrosylation of target proteins.

It is found in the nucleus. Its subcellular location is the cytoplasm. The protein resides in the secreted. Functionally, participates in various redox reactions through the reversible oxidation of its active center dithiol to a disulfide and catalyzes dithiol-disulfide exchange reactions. Plays a role in the reversible S-nitrosylation of cysteine residues in target proteins, and thereby contributes to the response to intracellular nitric oxide. Nitrosylates the active site Cys of CASP3 in response to nitric oxide (NO), and thereby inhibits caspase-3 activity. Induces the FOS/JUN AP-1 DNA binding activity in ionizing radiation (IR) cells through its oxidation/reduction status and stimulates AP-1 transcriptional activity. ADF augments the expression of the interleukin-2 receptor TAC (IL2R/P55). This is Thioredoxin (Txn) from Mus musculus (Mouse).